A 798-amino-acid chain; its full sequence is Phenylalanine--tRNA ligase beta subunit (798 aa).

One can recognise a tRNA-binding domain in the interval S39 to L148. Residues D401–A476 enclose the B5 domain. Mg(2+) is bound by residues D454, D460, E463, and E464. In terms of domain architecture, FDX-ACB spans S704–R797.

The protein belongs to the phenylalanyl-tRNA synthetase beta subunit family. Type 1 subfamily. Tetramer of two alpha and two beta subunits. It depends on Mg(2+) as a cofactor.

The protein resides in the cytoplasm. It catalyses the reaction tRNA(Phe) + L-phenylalanine + ATP = L-phenylalanyl-tRNA(Phe) + AMP + diphosphate + H(+). The polypeptide is Phenylalanine--tRNA ligase beta subunit (Paramagnetospirillum magneticum (strain ATCC 700264 / AMB-1) (Magnetospirillum magneticum)).